The primary structure comprises 217 residues: Fucoxanthin-chlorophyll a-c binding protein B, chloroplastic (217 aa).

The transit peptide at 1–39 directs the protein to the chloroplast; the sequence is MKSAVMAVACAAAPGFRGPSAFNGAALTTSAKACSAMKM. 3 consecutive transmembrane segments (helical) span residues 81-101, 122-142, and 183-203; these read IAML…PGML, IPPA…LAVM, and GRAA…NNKP.

It belongs to the fucoxanthin chlorophyll protein family. As to quaternary structure, the LHC complex of chromophytic algae is composed of fucoxanthin, chlorophyll A and C bound non-covalently by fucoxanthin chlorophyll proteins (FCPs). The ratio of pigments in this LHC is; fucoxanthin: chlorophyll C: chlorophyll A; (0.6-1): (0.1-0.3): (1).

The protein resides in the plastid. It is found in the chloroplast thylakoid membrane. Its function is as follows. The light-harvesting complex (LHC) functions as a light receptor, it captures and delivers excitation energy to photosystems with which it is closely associated. Energy is transferred from the carotenoid and chlorophyll C (or B) to chlorophyll A and the photosynthetic reaction centers where it is used to synthesize ATP and reducing power. The polypeptide is Fucoxanthin-chlorophyll a-c binding protein B, chloroplastic (FCPB) (Macrocystis pyrifera (Giant kelp)).